Here is a 233-residue protein sequence, read N- to C-terminus: uncharacterized protein (233 aa).

Residues 21–41 (LNILIAIVSILIVVVAANLFI) form a helical membrane-spanning segment. A disordered region spans residues 44-163 (PSSKDVSKDS…GEHAATYDSS (120 aa)). 3 stretches are compositionally biased toward basic and acidic residues: residues 48–57 (DVSKDSETAQ), 66–108 (KTEK…KKDD), and 135–144 (DVEKTYENPD).

It is found in the cell membrane. This is an uncharacterized protein from Bacillus subtilis (strain 168).